We begin with the raw amino-acid sequence, 109 residues long: Cell division protein ZapA (109 aa).

Residues 21-99 (PEQLDALNQA…IEQALLEQGR (79 aa)) adopt a coiled-coil conformation.

It belongs to the ZapA family. Type 1 subfamily. In terms of assembly, homodimer. Interacts with FtsZ.

The protein resides in the cytoplasm. Functionally, activator of cell division through the inhibition of FtsZ GTPase activity, therefore promoting FtsZ assembly into bundles of protofilaments necessary for the formation of the division Z ring. It is recruited early at mid-cell but it is not essential for cell division. This chain is Cell division protein ZapA, found in Edwardsiella ictaluri (strain 93-146).